The following is a 274-amino-acid chain: Large ribosomal subunit protein uL2 (274 aa).

Disordered regions lie at residues 28–54 (APYA…TRHI) and 223–265 (VAMN…KRTD). Residues 39–48 (KSGGRNNNGR) are compositionally biased toward low complexity.

It belongs to the universal ribosomal protein uL2 family. As to quaternary structure, part of the 50S ribosomal subunit. Forms a bridge to the 30S subunit in the 70S ribosome.

Its function is as follows. One of the primary rRNA binding proteins. Required for association of the 30S and 50S subunits to form the 70S ribosome, for tRNA binding and peptide bond formation. It has been suggested to have peptidyltransferase activity; this is somewhat controversial. Makes several contacts with the 16S rRNA in the 70S ribosome. The chain is Large ribosomal subunit protein uL2 from Alteromonas mediterranea (strain DSM 17117 / CIP 110805 / LMG 28347 / Deep ecotype).